The primary structure comprises 86 residues: Anti-adapter protein IraP (86 aa).

Residues 1 to 36 (MKNLIAELLLKLAQKEEESKELVAQVEALEIIVTAM) adopt a coiled-coil conformation.

This sequence belongs to the IraP family. As to quaternary structure, interacts with RssB.

Its subcellular location is the cytoplasm. In terms of biological role, inhibits RpoS proteolysis by regulating RssB activity, thereby increasing the stability of the sigma stress factor RpoS especially during phosphate and magnesium starvation, but also in stationary phase and during nitrogen starvation. Its effect on RpoS stability is due to its interaction with RssB, which probably blocks the interaction of RssB with RpoS, and the consequent delivery of the RssB-RpoS complex to the ClpXP protein degradation pathway. The sequence is that of Anti-adapter protein IraP from Salmonella choleraesuis (strain SC-B67).